Consider the following 476-residue polypeptide: tRNA(Ile)-lysidine synthase (476 aa).

26–31 provides a ligand contact to ATP; it reads SGGSDS.

It belongs to the tRNA(Ile)-lysidine synthase family.

It is found in the cytoplasm. The catalysed reaction is cytidine(34) in tRNA(Ile2) + L-lysine + ATP = lysidine(34) in tRNA(Ile2) + AMP + diphosphate + H(+). Functionally, ligates lysine onto the cytidine present at position 34 of the AUA codon-specific tRNA(Ile) that contains the anticodon CAU, in an ATP-dependent manner. Cytidine is converted to lysidine, thus changing the amino acid specificity of the tRNA from methionine to isoleucine. The sequence is that of tRNA(Ile)-lysidine synthase from Bartonella quintana (strain Toulouse) (Rochalimaea quintana).